Consider the following 232-residue polypeptide: 2-C-methyl-D-erythritol 4-phosphate cytidylyltransferase (232 aa).

Belongs to the IspD/TarI cytidylyltransferase family. IspD subfamily.

The catalysed reaction is 2-C-methyl-D-erythritol 4-phosphate + CTP + H(+) = 4-CDP-2-C-methyl-D-erythritol + diphosphate. It functions in the pathway isoprenoid biosynthesis; isopentenyl diphosphate biosynthesis via DXP pathway; isopentenyl diphosphate from 1-deoxy-D-xylulose 5-phosphate: step 2/6. Functionally, catalyzes the formation of 4-diphosphocytidyl-2-C-methyl-D-erythritol from CTP and 2-C-methyl-D-erythritol 4-phosphate (MEP). In Deinococcus radiodurans (strain ATCC 13939 / DSM 20539 / JCM 16871 / CCUG 27074 / LMG 4051 / NBRC 15346 / NCIMB 9279 / VKM B-1422 / R1), this protein is 2-C-methyl-D-erythritol 4-phosphate cytidylyltransferase.